Reading from the N-terminus, the 893-residue chain is Eukaryotic translation initiation factor 3 subunit A (893 aa).

Positions 319-502 (LQRMAAHVLL…NSIFFGTDLT (184 aa)) constitute a PCI domain. Coiled coils occupy residues 576–707 (QKII…RAKR) and 784–881 (EIAL…REVA). Disordered stretches follow at residues 592-634 (AREL…EIQA) and 837-893 (AEAR…RRRQ). The segment covering 837–881 (AEARRLEREAEDEKRRQQYEKQRAKEEEAERKIQEDRDRLAREVA) has biased composition (basic and acidic residues).

The protein belongs to the eIF-3 subunit A family. In terms of assembly, component of the eukaryotic translation initiation factor 3 (eIF-3) complex. The eIF-3 complex interacts with pix.

It is found in the cytoplasm. Its function is as follows. RNA-binding component of the eukaryotic translation initiation factor 3 (eIF-3) complex, which is involved in protein synthesis of a specialized repertoire of mRNAs and, together with other initiation factors, stimulates binding of mRNA and methionyl-tRNAi to the 40S ribosome. The eIF-3 complex specifically targets and initiates translation of a subset of mRNAs involved in cell proliferation. The sequence is that of Eukaryotic translation initiation factor 3 subunit A from Drosophila grimshawi (Hawaiian fruit fly).